Reading from the N-terminus, the 200-residue chain is Large ribosomal subunit protein uL13 (200 aa).

The protein belongs to the universal ribosomal protein uL13 family. As to quaternary structure, component of the large ribosomal subunit. Mature ribosomes consist of a small (40S) and a large (60S) subunit. The 40S subunit contains about 32 different proteins and 1 molecule of RNA (18S). The 60S subunit contains 45 different proteins and 3 molecules of RNA (25S, 5.8S and 5S).

Its subcellular location is the cytoplasm. Component of the ribosome, a large ribonucleoprotein complex responsible for the synthesis of proteins in the cell. The small ribosomal subunit (SSU) binds messenger RNAs (mRNAs) and translates the encoded message by selecting cognate aminoacyl-transfer RNA (tRNA) molecules. The large subunit (LSU) contains the ribosomal catalytic site termed the peptidyl transferase center (PTC), which catalyzes the formation of peptide bonds, thereby polymerizing the amino acids delivered by tRNAs into a polypeptide chain. The nascent polypeptides leave the ribosome through a tunnel in the LSU and interact with protein factors that function in enzymatic processing, targeting, and the membrane insertion of nascent chains at the exit of the ribosomal tunnel. The protein is Large ribosomal subunit protein uL13 of Candida albicans (strain SC5314 / ATCC MYA-2876) (Yeast).